A 222-amino-acid chain; its full sequence is UPF0316 protein Mboo_0791 (222 aa).

3 helical membrane-spanning segments follow: residues 25–45 (FFLFTPDILNYIVLPVLIFLA), 67–87 (LAPVIAFFEIIIWLLAIVGVL), and 93–113 (IAYFLAYAFGFALGTYVGLVI).

It belongs to the UPF0316 family.

The protein resides in the cell membrane. The sequence is that of UPF0316 protein Mboo_0791 from Methanoregula boonei (strain DSM 21154 / JCM 14090 / 6A8).